Here is a 466-residue protein sequence, read N- to C-terminus: 3-isopropylmalate dehydratase large subunit (466 aa).

The [4Fe-4S] cluster site is built by Cys347, Cys407, and Cys410.

Belongs to the aconitase/IPM isomerase family. LeuC type 1 subfamily. As to quaternary structure, heterodimer of LeuC and LeuD. [4Fe-4S] cluster is required as a cofactor.

The catalysed reaction is (2R,3S)-3-isopropylmalate = (2S)-2-isopropylmalate. Its pathway is amino-acid biosynthesis; L-leucine biosynthesis; L-leucine from 3-methyl-2-oxobutanoate: step 2/4. In terms of biological role, catalyzes the isomerization between 2-isopropylmalate and 3-isopropylmalate, via the formation of 2-isopropylmaleate. This chain is 3-isopropylmalate dehydratase large subunit, found in Pseudoalteromonas translucida (strain TAC 125).